Consider the following 405-residue polypeptide: tRNA (uracil(54)-C(5))-methyltransferase (405 aa).

Residues cysteine 61, cysteine 67, cysteine 70, and cysteine 137 each coordinate [4Fe-4S] cluster. S-adenosyl-L-methionine contacts are provided by residues glutamine 252, tyrosine 278, threonine 283, aspartate 299–serine 300, aspartate 326, and aspartate 340. Cysteine 367 (nucleophile) is an active-site residue. Glutamate 399 serves as the catalytic Proton acceptor.

The protein belongs to the class I-like SAM-binding methyltransferase superfamily. RNA M5U methyltransferase family.

It carries out the reaction uridine(54) in tRNA + S-adenosyl-L-methionine = 5-methyluridine(54) in tRNA + S-adenosyl-L-homocysteine + H(+). Its activity is regulated as follows. Activated by magnesium ions. Functionally, catalyzes the formation of 5-methyl-uridine at position 54 (m5U54) in tRNA. The chain is tRNA (uracil(54)-C(5))-methyltransferase from Pyrococcus abyssi (strain GE5 / Orsay).